Here is a 236-residue protein sequence, read N- to C-terminus: uncharacterized protein (236 aa).

A compositionally biased stretch (polar residues) spans 1–17; sequence MSVSSLLQPNTYNINSK. The segment at 1-94 is disordered; that stretch reads MSVSSLLQPN…GVKGTTGGTI (94 aa). Over residues 18–35 the composition is skewed to low complexity; it reads SQSLSNTPSNPTSQTNTL. The Collagen-like domain occupies 58 to 91; sequence GPSGPKGDKGDPGSKGETGSQGIKGDPGVKGTTG.

It belongs to the sputnik virus V6 family.

This is an uncharacterized protein from Sputnik virophage.